Consider the following 918-residue polypeptide: Protein translocase subunit SecA (918 aa).

ATP-binding positions include glutamine 87, 105 to 109 (GEGKT), and aspartate 516. Residues cysteine 902, cysteine 904, cysteine 913, and histidine 914 each coordinate Zn(2+).

It belongs to the SecA family. In terms of assembly, monomer and homodimer. Part of the essential Sec protein translocation apparatus which comprises SecA, SecYEG and auxiliary proteins SecDF-YajC and YidC. Requires Zn(2+) as cofactor.

The protein localises to the cell inner membrane. It localises to the cytoplasm. The enzyme catalyses ATP + H2O + cellular proteinSide 1 = ADP + phosphate + cellular proteinSide 2.. Functionally, part of the Sec protein translocase complex. Interacts with the SecYEG preprotein conducting channel. Has a central role in coupling the hydrolysis of ATP to the transfer of proteins into and across the cell membrane, serving both as a receptor for the preprotein-SecB complex and as an ATP-driven molecular motor driving the stepwise translocation of polypeptide chains across the membrane. In Methylibium petroleiphilum (strain ATCC BAA-1232 / LMG 22953 / PM1), this protein is Protein translocase subunit SecA.